The chain runs to 108 residues: Glutaredoxin-C10 (108 aa).

The Glutaredoxin domain occupies 1–107 (MERVAKLASE…PMLKNAGALW (107 aa)). Cysteine 21 and cysteine 24 are joined by a disulfide. Residues 105–108 (ALWL) carry the Responsive for interaction with TGA factors motif.

Belongs to the glutaredoxin family. CC-type subfamily.

It localises to the cytoplasm. The protein localises to the nucleus. In terms of biological role, has a glutathione-disulfide oxidoreductase activity in the presence of NADPH and glutathione reductase. Reduces low molecular weight disulfides and proteins. In Oryza sativa subsp. japonica (Rice), this protein is Glutaredoxin-C10 (GRXC10).